A 430-amino-acid chain; its full sequence is Adenylosuccinate synthetase (430 aa).

GTP-binding positions include 12–18 (GDEGKGK) and 40–42 (GHT). Aspartate 13 acts as the Proton acceptor in catalysis. Mg(2+) contacts are provided by aspartate 13 and glycine 40. Residues 13–16 (DEGK), 38–41 (NAGH), threonine 130, arginine 144, glutamine 224, threonine 239, and arginine 303 contribute to the IMP site. Histidine 41 acts as the Proton donor in catalysis. 299-305 (TTTGRKR) serves as a coordination point for substrate. GTP is bound by residues arginine 305, 331–333 (KLD), and 413–415 (STS).

This sequence belongs to the adenylosuccinate synthetase family. As to quaternary structure, homodimer. Requires Mg(2+) as cofactor.

It localises to the cytoplasm. The catalysed reaction is IMP + L-aspartate + GTP = N(6)-(1,2-dicarboxyethyl)-AMP + GDP + phosphate + 2 H(+). It participates in purine metabolism; AMP biosynthesis via de novo pathway; AMP from IMP: step 1/2. Its function is as follows. Plays an important role in the de novo pathway of purine nucleotide biosynthesis. Catalyzes the first committed step in the biosynthesis of AMP from IMP. In Ruegeria pomeroyi (strain ATCC 700808 / DSM 15171 / DSS-3) (Silicibacter pomeroyi), this protein is Adenylosuccinate synthetase.